We begin with the raw amino-acid sequence, 133 residues long: Salivary cystatin-L (133 aa).

An N-terminal signal peptide occupies residues methionine 1 to alanine 19. The 89-residue stretch at alanine 30 to asparagine 118 folds into the Cystatin domain. 2 cysteine pairs are disulfide-bonded: cysteine 89–cysteine 100 and cysteine 111–cysteine 130.

This sequence belongs to the cystatin family. Monomer. Can form homodimers in vitro, but probably not in vivo. Homodimers are predicted to be inactive; dimerization disrupts the interaction with target proteases. As to expression, detected in saliva (at protein level). Detected in salivary gland and midgut.

Its subcellular location is the secreted. In terms of biological role, contributes to the suppression of the host's immune response to tick salivary proteins and is important for successful feeding on hosts. Inhibitor of cysteine proteinases. Inhibits host papain and cathepsin L (CTSL) (in vitro). Inhibits host cathepsin S (CTSS) (in vitro). Inhibits host CTSV and CTSC, but to a lesser degree (in vitro). Inhibits host immune responses via its inhibition of host cathepsins. Inhibits differentiation of host dendritic cells. Inhibits proliferation of host T-cells in response to antigen stimulus. Down-regulates IL1B production by host mast cells, and this then leads to impaired activation of IL1R1, resulting in decreased IL9 production. Inhibits host inflammatory reactions and recruitment of host neutrophils. Attenuates IFN-beta (IFNB1)-triggered JAK/STAT signaling pathway in mouse dendritic cells. Functionally, (Microbial infection) Down-regulates TLR2-mediated host responses to infection by Borrelia burgdorferi and the production of the chemokine CCL3 by host dendritic cells. Down-regulates host responses to infection by B.burgdorferi and the production of IFNB1 by host dendritic cells. This Ixodes scapularis (Black-legged tick) protein is Salivary cystatin-L.